The following is a 258-amino-acid chain: Spindlin-2A (258 aa).

Low complexity predominate over residues methionine 1 to glycine 23. A disordered region spans residues methionine 1–isoleucine 49. A compositionally biased stretch (basic residues) spans threonine 28–glycine 39. Tudor-like domain stretches follow at residues valine 50 to histidine 99, isoleucine 129 to leucine 178, and isoleucine 210 to valine 255. 2 histone H3K4me3 and H3R8me2a binding regions span residues glutamate 138 and aspartate 246–histidine 248.

This sequence belongs to the SPIN/STSY family. As to quaternary structure, interacts with C11orf84/SPINDOC.

It localises to the nucleus. Its function is as follows. May be involved in the regulation of cell cycle progression. Exhibits H3K4me3-binding activity. This Homo sapiens (Human) protein is Spindlin-2A (SPIN2A).